Consider the following 223-residue polypeptide: Endonuclease NucS (223 aa).

The protein belongs to the NucS endonuclease family.

It is found in the cytoplasm. Its function is as follows. Cleaves both 3' and 5' ssDNA extremities of branched DNA structures. The protein is Endonuclease NucS of Mycobacterium marinum (strain ATCC BAA-535 / M).